The chain runs to 113 residues: Small ribosomal subunit protein bS18 (113 aa).

Residues 1–41 (MSEEKIVNTEAAPEAVAERPARAERSERPERPAKGPFGKKR) are disordered. Residues 16-33 (VAERPARAERSERPERPA) show a composition bias toward basic and acidic residues.

Belongs to the bacterial ribosomal protein bS18 family. In terms of assembly, part of the 30S ribosomal subunit. Forms a tight heterodimer with protein bS6.

In terms of biological role, binds as a heterodimer with protein bS6 to the central domain of the 16S rRNA, where it helps stabilize the platform of the 30S subunit. This Elusimicrobium minutum (strain Pei191) protein is Small ribosomal subunit protein bS18.